The chain runs to 110 residues: Insulin (110 aa).

A signal peptide spans 1–24; sequence MALWMRLLPLLAFLILWEPSPAHA. Disulfide bonds link cysteine 31-cysteine 96, cysteine 43-cysteine 109, and cysteine 95-cysteine 100. Residues 57-87 constitute a propeptide, c peptide; that stretch reads GVDDPQMPQLELGGSPGAGDLRALALEVARQ.

The protein belongs to the insulin family. As to quaternary structure, heterodimer of a B chain and an A chain linked by two disulfide bonds.

It is found in the secreted. Insulin decreases blood glucose concentration. It increases cell permeability to monosaccharides, amino acids and fatty acids. It accelerates glycolysis, the pentose phosphate cycle, and glycogen synthesis in liver. The sequence is that of Insulin (INS) from Psammomys obesus (Fat sand rat).